A 600-amino-acid polypeptide reads, in one-letter code: Aspartate--tRNA(Asp/Asn) ligase (600 aa).

Glu187 contacts L-aspartate. Residues 211–214 (QIFK) form an aspartate region. Residues Arg233 and His463 each coordinate L-aspartate. Position 233–235 (233–235 (RDE)) interacts with ATP. Glu497 lines the ATP pocket. An L-aspartate-binding site is contributed by Arg504. 549 to 552 (GIDR) is a binding site for ATP.

This sequence belongs to the class-II aminoacyl-tRNA synthetase family. Type 1 subfamily. Homodimer.

The protein resides in the cytoplasm. It carries out the reaction tRNA(Asx) + L-aspartate + ATP = L-aspartyl-tRNA(Asx) + AMP + diphosphate. In terms of biological role, aspartyl-tRNA synthetase with relaxed tRNA specificity since it is able to aspartylate not only its cognate tRNA(Asp) but also tRNA(Asn). Reaction proceeds in two steps: L-aspartate is first activated by ATP to form Asp-AMP and then transferred to the acceptor end of tRNA(Asp/Asn). The polypeptide is Aspartate--tRNA(Asp/Asn) ligase (Wolbachia sp. subsp. Brugia malayi (strain TRS)).